A 291-amino-acid chain; its full sequence is uncharacterized protein (291 aa).

The region spanning 5–196 (GVFSGGGVKG…LSNFPIWLFS (192 aa)) is the PNPLA domain. Residues 9-14 (GGGVKG) carry the GXGXXG motif. A helical membrane pass occupies residues 34 to 50 (VAGTSAGAIIAAFIASG). A GXSXG motif is present at residues 36 to 40 (GTSAG). Serine 38 acts as the Nucleophile in catalysis. The Proton acceptor role is filled by aspartate 183. Positions 183–185 (DGG) match the DGA/G motif.

Its subcellular location is the cell membrane. Functionally, probable lipid hydrolase. This is an uncharacterized protein from Bacillus subtilis (strain 168).